Reading from the N-terminus, the 184-residue chain is C-phycoerythrin beta chain (184 aa).

Residues C48 and C59 each contribute to the (2R,3E)-phycoerythrobilin site. N70 carries the post-translational modification N4-methylasparagine. Residues C80 and C165 each coordinate (2R,3E)-phycoerythrobilin.

The protein belongs to the phycobiliprotein family. Heterodimer of an alpha and a beta chain. Contains three covalently linked bilin chromophores.

It is found in the cellular thylakoid membrane. Its function is as follows. Light-harvesting photosynthetic bile pigment-protein from the phycobiliprotein complex. The protein is C-phycoerythrin beta chain (cpeB) of Microchaete diplosiphon (Fremyella diplosiphon).